We begin with the raw amino-acid sequence, 318 residues long: L-lactate dehydrogenase (318 aa).

NAD(+) is bound by residues V18, D39, K44, Y69, and 83–84 (GA). Substrate-binding residues include Q86 and R92. NAD(+) is bound by residues S105, 122–124 (VSN), and S147. 124 to 127 (NPVD) contacts substrate. 152 to 155 (DTSR) contributes to the substrate binding site. H179 (proton acceptor) is an active-site residue. Position 225 is a phosphotyrosine (Y225). T234 is a substrate binding site.

It belongs to the LDH/MDH superfamily. LDH family. In terms of assembly, homotetramer.

It localises to the cytoplasm. The enzyme catalyses (S)-lactate + NAD(+) = pyruvate + NADH + H(+). The protein operates within fermentation; pyruvate fermentation to lactate; (S)-lactate from pyruvate: step 1/1. In terms of biological role, catalyzes the conversion of lactate to pyruvate. This Clostridium botulinum (strain 657 / Type Ba4) protein is L-lactate dehydrogenase.